The sequence spans 376 residues: Cytochrome b (376 aa).

Transmembrane regions (helical) follow at residues 28–48, 72–94, 107–127, and 169–189; these read YGFLLGIIFFIQIITGVFLAS, WCFRYMHATGASLVFLLTYLHIL, SWISGLILFMIFIVTAFVGYV, and FFVLHFILPFIGLCIVFIHIF. Heme b-binding residues include His78 and His92. Heme b is bound by residues His173 and His187. His192 is an a ubiquinone binding site. Helical transmembrane passes span 214–234, 274–294, 317–337, and 340–360; these read LLSLDVKGFNNVIILFLIQSL, VPSKPAGLVIVLLSLQLLFLL, VPIIWFMCAFYALLWIGCQLP, and IFILYGRLFIVLFFCSGLFVL.

This sequence belongs to the cytochrome b family. In terms of assembly, the main subunits of complex b-c1 are: cytochrome b, cytochrome c1 and the Rieske protein. Heme b serves as cofactor.

The protein localises to the mitochondrion inner membrane. Its function is as follows. Component of the ubiquinol-cytochrome c reductase complex (complex III or cytochrome b-c1 complex) that is part of the mitochondrial respiratory chain. The b-c1 complex mediates electron transfer from ubiquinol to cytochrome c. Contributes to the generation of a proton gradient across the mitochondrial membrane that is then used for ATP synthesis. The protein is Cytochrome b (MT-CYB) of Plasmodium falciparum.